The following is a 506-amino-acid chain: Proline--tRNA ligase (506 aa).

Belongs to the class-II aminoacyl-tRNA synthetase family. ProS type 3 subfamily. Homodimer.

Its subcellular location is the cytoplasm. It catalyses the reaction tRNA(Pro) + L-proline + ATP = L-prolyl-tRNA(Pro) + AMP + diphosphate. Its function is as follows. Catalyzes the attachment of proline to tRNA(Pro) in a two-step reaction: proline is first activated by ATP to form Pro-AMP and then transferred to the acceptor end of tRNA(Pro). The chain is Proline--tRNA ligase from Akkermansia muciniphila (strain ATCC BAA-835 / DSM 22959 / JCM 33894 / BCRC 81048 / CCUG 64013 / CIP 107961 / Muc).